Here is a 310-residue protein sequence, read N- to C-terminus: Olfactory receptor 5P52 (310 aa).

Residues 1-25 are Extracellular-facing; that stretch reads MEAENHTTVAELIILGLTEDPKLCI. A glycan (N-linked (GlcNAc...) asparagine) is linked at Asn5. A helical membrane pass occupies residues 26–46; the sequence is VFFVIFLGVYIITLVGNISII. Over 47-54 the chain is Cytoplasmic; that stretch reads TLIRISSQ. The chain crosses the membrane as a helical span at residues 55-75; the sequence is LHTPMYLFLSHLAFVDIVFST. At 76 to 99 the chain is on the extracellular side; it reads SVSVIMLMELLGHGLVLSVATCAA. Cys97 and Cys189 form a disulfide bridge. Residues 100–120 form a helical membrane-spanning segment; the sequence is QLCMTVSFGSAECFLLAAMAY. At 121–133 the chain is on the cytoplasmic side; that stretch reads DRYVAICSPLLYS. A helical membrane pass occupies residues 134–154; sequence TLMSSRVCFLLLGISYVGGFV. The Extracellular portion of the chain corresponds to 155–196; sequence NGWTFTGCVLSLSFCGPTQINHFFCDFSPLLKVSCSDVSIIG. The helical transmembrane segment at 197 to 217 threads the bilayer; the sequence is IIPSISSGSIIVVTVFVIAVS. Residues 218–237 lie on the Cytoplasmic side of the membrane; it reads YIYILITILKMRSTEGRHKA. Residues 238-258 traverse the membrane as a helical segment; it reads FSTCTSHLTAVTLFYGTITVI. Residues 259 to 271 lie on the Extracellular side of the membrane; the sequence is YVMPKSSYSTEQN. Residues 272–292 form a helical membrane-spanning segment; sequence KVISLFYTVVIPMLNPLIYSL. Residues 293–310 lie on the Cytoplasmic side of the membrane; sequence RNRDVKDALRKAIVRVYS.

The protein belongs to the G-protein coupled receptor 1 family.

It is found in the cell membrane. Functionally, potential odorant receptor. The polypeptide is Olfactory receptor 5P52 (Mus musculus (Mouse)).